Consider the following 276-residue polypeptide: Large ribosomal subunit protein uL2 (276 aa).

The tract at residues 221–276 (RGSAMNPNDHPHGGGEGRAPIGRKSPMTPWGKKARGVKTRDRKKASNALIIRRRTK) is disordered. A compositionally biased stretch (basic residues) spans 252–276 (KKARGVKTRDRKKASNALIIRRRTK).

Belongs to the universal ribosomal protein uL2 family. In terms of assembly, part of the 50S ribosomal subunit. Forms a bridge to the 30S subunit in the 70S ribosome.

One of the primary rRNA binding proteins. Required for association of the 30S and 50S subunits to form the 70S ribosome, for tRNA binding and peptide bond formation. It has been suggested to have peptidyltransferase activity; this is somewhat controversial. Makes several contacts with the 16S rRNA in the 70S ribosome. The polypeptide is Large ribosomal subunit protein uL2 (Onion yellows phytoplasma (strain OY-M)).